The sequence spans 484 residues: Glutamyl-tRNA(Gln) amidotransferase subunit A (484 aa).

Catalysis depends on charge relay system residues lysine 77 and serine 152. Serine 176 serves as the catalytic Acyl-ester intermediate.

The protein belongs to the amidase family. GatA subfamily. As to quaternary structure, heterotrimer of A, B and C subunits.

It carries out the reaction L-glutamyl-tRNA(Gln) + L-glutamine + ATP + H2O = L-glutaminyl-tRNA(Gln) + L-glutamate + ADP + phosphate + H(+). Functionally, allows the formation of correctly charged Gln-tRNA(Gln) through the transamidation of misacylated Glu-tRNA(Gln) in organisms which lack glutaminyl-tRNA synthetase. The reaction takes place in the presence of glutamine and ATP through an activated gamma-phospho-Glu-tRNA(Gln). The sequence is that of Glutamyl-tRNA(Gln) amidotransferase subunit A from Pseudomonas aeruginosa (strain ATCC 15692 / DSM 22644 / CIP 104116 / JCM 14847 / LMG 12228 / 1C / PRS 101 / PAO1).